Here is a 363-residue protein sequence, read N- to C-terminus: Fructose-1,6-bisphosphatase 1 (363 aa).

Valine 2 carries the post-translational modification N-acetylvaline. Residues 18-22 (VLEEG) and 28-32 (TGEMT) contribute to the AMP site. Aspartate 69 and glutamate 98 together coordinate Mg(2+). Residue 113-114 (KY) participates in AMP binding. 3 residues coordinate Mg(2+): aspartate 119, leucine 121, and aspartate 122. 122–125 (DGSS) contacts substrate. Arginine 141 contacts AMP. Lysine 151 is subject to N6-succinyllysine. Substrate-binding positions include 213–216 (NEGY), 244–249 (RYVGSM), tyrosine 265, and 275–277 (KLR). 3 positions are modified to phosphotyrosine: tyrosine 216, tyrosine 245, and tyrosine 265. Glutamate 281 contributes to the Mg(2+) binding site. 2 positions are modified to phosphoserine: serine 339 and serine 353.

The protein belongs to the FBPase class 1 family. As to quaternary structure, homotetramer. It depends on Mg(2+) as a cofactor.

The enzyme catalyses beta-D-fructose 1,6-bisphosphate + H2O = beta-D-fructose 6-phosphate + phosphate. Its pathway is carbohydrate biosynthesis; gluconeogenesis. Its activity is regulated as follows. Subject to complex allosteric regulation. The enzyme can assume an active R-state, or an inactive T-state. Intermediate conformations may exist. AMP acts as an allosteric inhibitor. AMP binding affects the turnover of bound substrate and not the affinity for substrate. Fructose 2,6-bisphosphate acts as a competitive inhibitor. Fructose 2,6-bisphosphate and AMP have synergistic effects. In terms of biological role, catalyzes the hydrolysis of fructose 1,6-bisphosphate to fructose 6-phosphate in the presence of divalent cations, acting as a rate-limiting enzyme in gluconeogenesis. Plays a role in regulating glucose sensing and insulin secretion of pancreatic beta-cells. Appears to modulate glycerol gluconeogenesis in liver. Important regulator of appetite and adiposity; increased expression of the protein in liver after nutrient excess increases circulating satiety hormones and reduces appetite-stimulating neuropeptides and thus seems to provide a feedback mechanism to limit weight gain. This is Fructose-1,6-bisphosphatase 1 (Fbp1) from Rattus norvegicus (Rat).